Here is a 99-residue protein sequence, read N- to C-terminus: uncharacterized protein (99 aa).

This is an uncharacterized protein from Bacillus subtilis (strain 168).